Consider the following 436-residue polypeptide: ATP-dependent protease ATPase subunit HslU (436 aa).

ATP-binding positions include Ile-18, 60–65 (GVGKTE), Asp-249, Glu-314, and Arg-386.

It belongs to the ClpX chaperone family. HslU subfamily. As to quaternary structure, a double ring-shaped homohexamer of HslV is capped on each side by a ring-shaped HslU homohexamer. The assembly of the HslU/HslV complex is dependent on binding of ATP.

The protein resides in the cytoplasm. Functionally, ATPase subunit of a proteasome-like degradation complex; this subunit has chaperone activity. The binding of ATP and its subsequent hydrolysis by HslU are essential for unfolding of protein substrates subsequently hydrolyzed by HslV. HslU recognizes the N-terminal part of its protein substrates and unfolds these before they are guided to HslV for hydrolysis. The chain is ATP-dependent protease ATPase subunit HslU from Ruegeria sp. (strain TM1040) (Silicibacter sp.).